A 262-amino-acid polypeptide reads, in one-letter code: Apolipoprotein A-I-2 (262 aa).

The signal sequence occupies residues 1–18 (MQFLALALTILLAAATQA). The segment at 32 to 63 (VKVAMMEYMAQVKETAQRSIDHLDDTEYKEYK) is 3 X approximate tandem repeats. 2 repeat units span residues 64-85 (VQLS…ESLA) and 87-107 (YSEA…AEVM). A 10 X approximate tandem repeats region spans residues 64–262 (VQLSQSLDNL…YETISQAMKA (199 aa)). The 3; half-length repeat unit spans residues 108–118 (KDVEELRSQLE). A run of 5 repeats spans residues 119–140 (PKRA…KRLE), 141–162 (PLIK…VKIE), 163–184 (PVVE…AKLM), 185–206 (PIVE…TLAS), and 207–228 (PYAE…EKVV). One copy of the 9; half-length repeat lies at 229 to 239 (PLTTDFKGQLG). Copy 10 of the repeat occupies 240–262 (PAAEQAKEKLMALYETISQAMKA).

It belongs to the apolipoprotein A1/A4/E family.

It localises to the secreted. Its function is as follows. Participates in the reverse transport of cholesterol from tissues to the liver for excretion by promoting cholesterol efflux from tissues and by acting as a cofactor for the lecithin cholesterol acyltransferase (LCAT). This is Apolipoprotein A-I-2 from Oncorhynchus mykiss (Rainbow trout).